The following is a 1214-amino-acid chain: Inner capsid protein VP3 (1214 aa).

The segment at Met-1–Thr-80 is disordered. A compositionally biased stretch (polar residues) spans Lys-8–Asp-18. Residues Pro-28–Ala-51 are compositionally biased toward low complexity. The segment at Tyr-117–His-140 adopts a C2H2-type zinc-finger fold.

Belongs to the turreted BTV-fold inner capsid family. In terms of assembly, homodecamer; each decamer is made up of two conformers of VP2, called VP2A and VP2B. 12 homodecamers assemble to form an icosahedral capsid. Interacts with VP6.

The protein localises to the virion. Its function is as follows. Inner capsid protein that self-assembles to form an icosahedral capsid with a T=2 symmetry, which consists of 120 copies of VP2, with channels at each of its five-fold vertices. This capsid constitutes the innermost concentric layer of the viral mature particle. This is Inner capsid protein VP3 (S3) from Notemigonus crysoleucas (Golden shiner).